A 123-amino-acid polypeptide reads, in one-letter code: Small ribosomal subunit protein uS13 (123 aa).

The disordered stretch occupies residues 96 to 123 (GLPVRGQRTKTNARTRKGPKKTVAGKKK).

The protein belongs to the universal ribosomal protein uS13 family. As to quaternary structure, part of the 30S ribosomal subunit. Forms a loose heterodimer with protein S19. Forms two bridges to the 50S subunit in the 70S ribosome.

Functionally, located at the top of the head of the 30S subunit, it contacts several helices of the 16S rRNA. In the 70S ribosome it contacts the 23S rRNA (bridge B1a) and protein L5 of the 50S subunit (bridge B1b), connecting the 2 subunits; these bridges are implicated in subunit movement. Contacts the tRNAs in the A and P-sites. This Nocardia farcinica (strain IFM 10152) protein is Small ribosomal subunit protein uS13.